The chain runs to 524 residues: MQSVQGTQAMSDPTAVRPADKRAFLKWAVLGAVGIVNGYATILMYSRGEVAFALLTLILTTLALYIFGSRKTYAHRYIYPGIAGMILFILFPLAYTVGLAFTNYSAKNQLTLERAQSVLMDQTFQSGESYAFQLYKTEQGYRLLIEDGDERLATAPFSLSGNVPTDLNLEVIGGIDGEVEPIKTIIGYRTELSGIDLHFPDGEDIRMSGLRKFAAVKPLYTLQDDGETLTNNQSGQVLRPNMEIGFYQPINESGEFVGERVSPGFVVSIGTHNFERVWKDEGIKEPFINIFIWTVIFSVLTVIFTLMIGLVLASVVQWEALKGRAVYRVLLILPYAVPAFISILIFRGLFNQSFGEINMVLNGLFGLSPAWFSDPLLAKTMVLIVNTWLGFPYMMIFCMGLLKAIPDDLYEASAIDGANFIHNFTKITLPMMIKPLTPLLIASFAFNFNNFVMIQLLTQGGPNRIGTSEPAGYTDLLVSYTYRIAFEGTGGQDFGLASAIATLIFLLVGALALLNLRFTKLSQQ.

Topologically, residues 1 to 22 (MQSVQGTQAMSDPTAVRPADKR) are cytoplasmic. Residues 23–45 (AFLKWAVLGAVGIVNGYATILMY) traverse the membrane as a helical segment. Residues 46 to 49 (SRGE) lie on the Periplasmic side of the membrane. The helical transmembrane segment at 50–69 (VAFALLTLILTTLALYIFGS) threads the bilayer. Residues 70–81 (RKTYAHRYIYPG) lie on the Cytoplasmic side of the membrane. A helical transmembrane segment spans residues 82–104 (IAGMILFILFPLAYTVGLAFTNY). Topologically, residues 105-289 (SAKNQLTLER…DEGIKEPFIN (185 aa)) are periplasmic. Residues 290–312 (IFIWTVIFSVLTVIFTLMIGLVL) traverse the membrane as a helical segment. Positions 291–515 (FIWTVIFSVL…LLVGALALLN (225 aa)) constitute an ABC transmembrane type-1 domain. Over 313-324 (ASVVQWEALKGR) the chain is Cytoplasmic. The helical transmembrane segment at 325–347 (AVYRVLLILPYAVPAFISILIFR) threads the bilayer. The Periplasmic portion of the chain corresponds to 348–379 (GLFNQSFGEINMVLNGLFGLSPAWFSDPLLAK). A helical membrane pass occupies residues 380–402 (TMVLIVNTWLGFPYMMIFCMGLL). Topologically, residues 403 to 435 (KAIPDDLYEASAIDGANFIHNFTKITLPMMIKP) are cytoplasmic. The helical transmembrane segment at 436-458 (LTPLLIASFAFNFNNFVMIQLLT) threads the bilayer. Residues 459 to 493 (QGGPNRIGTSEPAGYTDLLVSYTYRIAFEGTGGQD) are Periplasmic-facing. A helical transmembrane segment spans residues 494–516 (FGLASAIATLIFLLVGALALLNL). Topologically, residues 517–524 (RFTKLSQQ) are cytoplasmic.

It belongs to the binding-protein-dependent transport system permease family. MalFG subfamily. As to quaternary structure, the complex is composed of two ATP-binding proteins (MalK), two transmembrane proteins (MalG and MalF) and a solute-binding protein (MalE).

It is found in the cell inner membrane. Functionally, part of the ABC transporter complex MalEFGK involved in maltose/maltodextrin import. Probably responsible for the translocation of the substrate across the membrane. This chain is Maltose/maltodextrin transport system permease protein MalF (malF), found in Vibrio cholerae serotype O1 (strain ATCC 39315 / El Tor Inaba N16961).